The sequence spans 187 residues: NADPH-dependent 3-demethoxyubiquinone 3-hydroxylase, mitochondrial (187 aa).

The transit peptide at M1–G8 directs the protein to the mitochondrion. K21 contributes to the NADH binding site. 2 repeat units span residues A28 to L99 and G100 to I187. A 2 X approximate tandem repeats region spans residues A28–I187. Residues E30, E60, H63, E112, E148, and H151 each coordinate Fe cation. K186 contacts NADH.

This sequence belongs to the COQ7 family. As to quaternary structure, component of a multi-subunit COQ enzyme complex. Requires Fe cation as cofactor.

It is found in the mitochondrion inner membrane. The protein resides in the mitochondrion. It localises to the nucleus. It carries out the reaction a 5-methoxy-2-methyl-3-(all-trans-polyprenyl)benzoquinone + NADH + O2 = a 3-demethylubiquinone + NAD(+) + H2O. It functions in the pathway cofactor biosynthesis; ubiquinone biosynthesis. In terms of biological role, catalyzes the hydroxylation of the 5-methoxy-2-methyl-3-(all-trans-polyprenyl)benzoquinone at the C6 position and participates in the biosynthesis of ubiquinone. Catalyzes the reaction through a substrate-mediated reduction pathway, whereby NADH shuttles electrons to 5-methoxy-2-methyl-3-(all-trans-decaprenyl)benzoquinone, which then transfers the electrons to the two Fe(3+) centers. The binding of 5-methoxy-2-methyl-3-(all-trans-polyprenyl)benzoquinone (DMQn) mediates reduction of the diiron center by nicotinamide adenine dinucleotide (NADH) and initiates oxygen activation for subsequent DMQ hydroxylation. Also has a structural role in the COQ enzyme complex, stabilizing other COQ polypeptides. Involved in lifespan determination in a ubiquinone-independent manner. Plays a role in modulating mitochondrial stress responses, acting in the nucleus, perhaps via regulating gene expression, independent of its characterized mitochondrial function in ubiquinone biosynthesis. Plays a role in modulating polyribosome formation. This chain is NADPH-dependent 3-demethoxyubiquinone 3-hydroxylase, mitochondrial, found in Caenorhabditis elegans.